We begin with the raw amino-acid sequence, 622 residues long: Presenilin-A (622 aa).

Positions 1 to 16 (MKENEDEINKTDEKYK) are enriched in basic and acidic residues. Disordered regions lie at residues 1–65 (MKEN…NLEN) and 132–160 (VSEQ…DETE). Residues 1–168 (MKENEDEINK…TEVPELVDYS (168 aa)) lie on the Cytoplasmic side of the membrane. A compositionally biased stretch (low complexity) spans 21 to 62 (SNNGNNKNKNNNNNNNNNNNNNNNNNNNNNNNNNNNNNGNSN). Residues 147–160 (DLDEDDDDDDDETE) show a composition bias toward acidic residues. The chain crosses the membrane as a helical span at residues 169–189 (EMIVSILYPVCITMVIVVLAI). Over 190-227 (RAISSSTSKNSQIVEISNDNSGGNGDSSSGADKMVFDS) the chain is Lumenal. The helical transmembrane segment at 228 to 248 (VVNSLIFLAVIILSTTIMVVL) threads the bilayer. The Cytoplasmic portion of the chain corresponds to 249 to 265 (YKFKLMKALYAWLMGTS). Residues 266-286 (ILLLGVFGGFLFLILLAYLNL) traverse the membrane as a helical segment. Residues 287–289 (GLD) are Lumenal-facing. Residues 290-310 (YVTFVIVVWNFSVGGIVCIFW) form a helical membrane-spanning segment. A topological domain (cytoplasmic) is located at residue tyrosine 311. Residues 312–332 (SPKLLNQGYLISISVLMALFF) traverse the membrane as a helical segment. The Lumenal segment spans residues 333-341 (SRLPDWTTW). Residues 342-362 (GILSIVSIYDIFAVLCPGGPL) form a helical membrane-spanning segment. Aspartate 351 is a catalytic residue. Residues 363–538 (RILIETAQKR…SYVKPKQSIR (176 aa)) are Cytoplasmic-facing. Residues 419 to 477 (NNNNNEDENKNNTEDGNNNNNKNKNNNNNNNNRIENENGAENSSENGSITPPPTIPNFI) form a disordered region. Over residues 432–466 (EDGNNNNNKNKNNNNNNNNRIENENGAENSSENGS) the composition is skewed to low complexity. The helical transmembrane segment at 539–559 (LGLGDFVFYSVLIGKAASYQI) threads the bilayer. Residue aspartate 543 is part of the active site. Residues 560-562 (TTV) lie on the Lumenal side of the membrane. A helical transmembrane segment spans residues 563–583 (FTVFIAIITGLFLTLILLAVF). The Cytoplasmic portion of the chain corresponds to 584–588 (RRALP). The PAL motif lies at 588–590 (PAL). Positions 589–609 (ALPMSIIFGIIVFFLTFKILI) form an intramembrane region, helical. Topologically, residues 610–622 (QYIYFLGENQIFV) are cytoplasmic.

The protein belongs to the peptidase A22A family. Homodimer. Component of the gamma-secretase complex, a complex composed of a presenilin homodimer, nicastrin, aph1 and pen2.

The protein resides in the endoplasmic reticulum membrane. It localises to the golgi apparatus membrane. Its function is as follows. Probable catalytic subunit of the gamma-secretase complex, an endoprotease complex that catalyzes the intramembrane cleavage of integral membrane proteins such as Notch receptors. Requires the other members of the gamma-secretase complex to have a protease activity. This is Presenilin-A (psenA) from Dictyostelium discoideum (Social amoeba).